The following is a 143-amino-acid chain: Type II secretion system core protein G (143 aa).

The propeptide at 1 to 17 (MIKRSITRSPSRAGQAG) is leader sequence. M18 bears the N-methylmethionine mark. A helical transmembrane segment spans residues 18–38 (MSLLEIIIVIVLIGAVLTLVG).

The protein belongs to the GSP G family. As to quaternary structure, type II secretion system is composed of four main components: the outer membrane complex, the inner membrane complex, the cytoplasmic secretion ATPase and the periplasm-spanning pseudopilus. Forms homomultimers. Interacts with pseudopilin tip complex component XpsJ as well as XpsI and XcpH. Interacts with XpsN and secretin XpsD. Post-translationally, cleaved by the prepilin peptidase. Methylated by prepilin peptidase at the amino group of the N-terminal methionine once the leader sequence is cleaved.

It is found in the cell inner membrane. Functionally, core component of the type II secretion system required for the energy-dependent secretion of extracellular factors such as proteases and toxins from the periplasm. Pseudopilin (pilin-like) protein that polymerizes to form the pseudopilus. Further polymerization triggers pseudopilus growth. In Xanthomonas campestris pv. campestris (strain ATCC 33913 / DSM 3586 / NCPPB 528 / LMG 568 / P 25), this protein is Type II secretion system core protein G (xpsG).